Here is a 227-residue protein sequence, read N- to C-terminus: 2,3-bisphosphoglycerate-dependent phosphoglycerate mutase (227 aa).

Residues 7 to 14, 20 to 21, arginine 59, 86 to 89, lysine 97, 113 to 114, and 182 to 183 each bind substrate; these read RHGQSEWN, TG, ERHY, RR, and GN. Catalysis depends on histidine 8, which acts as the Tele-phosphohistidine intermediate. Glutamate 86 (proton donor/acceptor) is an active-site residue.

Belongs to the phosphoglycerate mutase family. BPG-dependent PGAM subfamily. In terms of assembly, homodimer.

The catalysed reaction is (2R)-2-phosphoglycerate = (2R)-3-phosphoglycerate. Its pathway is carbohydrate degradation; glycolysis; pyruvate from D-glyceraldehyde 3-phosphate: step 3/5. In terms of biological role, catalyzes the interconversion of 2-phosphoglycerate and 3-phosphoglycerate. The chain is 2,3-bisphosphoglycerate-dependent phosphoglycerate mutase from Neisseria meningitidis serogroup C / serotype 2a (strain ATCC 700532 / DSM 15464 / FAM18).